Here is a 351-residue protein sequence, read N- to C-terminus: MAFRIASSPFTHNQQRTQRIMLLVILACLPGMLAQVYFFGYGNLIQVGLASATALIAEGVTLSLRKFAVRTTLADNSALLTAVLLGISLPPLAPWWMVVMATVFAIIIAKQLYGGLGQNPFNPAMIGYVVLLISFPVQMTSWLPPVPLQTIPVGFHDALVIIFTGHTPDGYTMQQLMHNVDGISQATPLDTFKTSLRSGQTPQSILQQPMFAQSLSGIGWQWVNIGFLIGGLFLLMRGTIRWHIPVSFLLSLMFCASLSWVIAPEKFAPPMLHLLSGATMLGAFFIATDPVTASTTNRGRLIFGALIGLLVWLIRTYGGYPDGVAFAVLLANITVPLIDYYTKPRAYGHRR.

The next 4 helical transmembrane spans lie at 20 to 40 (IMLLVILACLPGMLAQVYFFG), 44 to 64 (LIQVGLASATALIAEGVTLSL), 89 to 109 (LPPLAPWWMVVMATVFAIIIA), and 123 to 143 (PAMIGYVVLLISFPVQMTSWL). Thr-187 carries the post-translational modification FMN phosphoryl threonine. The next 5 membrane-spanning stretches (helical) occupy residues 215 to 235 (LSGIGWQWVNIGFLIGGLFLL), 244 to 264 (IPVSFLLSLMFCASLSWVIAP), 267 to 287 (FAPPMLHLLSGATMLGAFFIA), 301 to 321 (LIFGALIGLLVWLIRTYGGYP), and 322 to 342 (DGVAFAVLLANITVPLIDYYT).

Belongs to the NqrB/RnfD family. In terms of assembly, the complex is composed of six subunits: RnfA, RnfB, RnfC, RnfD, RnfE and RnfG. Requires FMN as cofactor.

It is found in the cell inner membrane. Part of a membrane-bound complex that couples electron transfer with translocation of ions across the membrane. This is Ion-translocating oxidoreductase complex subunit D from Pectobacterium carotovorum subsp. carotovorum (strain PC1).